Here is a 72-residue protein sequence, read N- to C-terminus: Cytotoxin 9 (72 aa).

Positions 1 to 12 are cleaved as a signal peptide; that stretch reads VVTIVCLDLGYT. Cystine bridges form between Cys-15/Cys-33, Cys-26/Cys-50, Cys-54/Cys-65, and Cys-66/Cys-71.

This sequence belongs to the three-finger toxin family. Short-chain subfamily. Type IA cytotoxin sub-subfamily. As to quaternary structure, monomer in solution; Homodimer and oligomer in the presence of negatively charged lipids forming a pore with a size ranging between 20 and 30 Angstroms. Expressed by the venom gland.

Its subcellular location is the secreted. In terms of biological role, shows cytolytic activity on many different cells by forming a pore in lipid membranes. In vivo, increases heart rate or kills the animal by cardiac arrest. In addition, it binds to heparin with high affinity, interacts with Kv channel-interacting protein 1 (KCNIP1) in a calcium-independent manner, and binds to integrin alpha-V/beta-3 (ITGAV/ITGB3) with moderate affinity. Preferentially binds acidic phospholipids like phosphatidylserine, phosphatidic acid and phosphatidyl glycerol. Has hemolytic activity towards human erythrocytes (EC(50)=0.171 uM) and cytolytic activity towards various cell lines. The protein is Cytotoxin 9 of Naja naja (Indian cobra).